A 552-amino-acid polypeptide reads, in one-letter code: Glutamate--tRNA ligase (552 aa).

A 'HIGH' region motif is present at residues 41 to 51 (PSPTGFQHIGG). The short motif at 293 to 297 (KLSKR) is the 'KMSKS' region element. Lysine 296 serves as a coordination point for ATP.

Belongs to the class-I aminoacyl-tRNA synthetase family. Glutamate--tRNA ligase type 1 subfamily. Monomer.

The protein localises to the cytoplasm. The enzyme catalyses tRNA(Glu) + L-glutamate + ATP = L-glutamyl-tRNA(Glu) + AMP + diphosphate. Catalyzes the attachment of glutamate to tRNA(Glu) in a two-step reaction: glutamate is first activated by ATP to form Glu-AMP and then transferred to the acceptor end of tRNA(Glu). This chain is Glutamate--tRNA ligase, found in Clostridium perfringens (strain SM101 / Type A).